A 525-amino-acid polypeptide reads, in one-letter code: Peptide chain release factor 3 (525 aa).

The region spanning 11 to 279 (NKRRTFAIIS…TYLQFAPAPS (269 aa)) is the tr-type G domain. GTP is bound by residues 20–27 (SHPDAGKT), 88–92 (DTPGH), and 142–145 (NKFD).

The protein belongs to the TRAFAC class translation factor GTPase superfamily. Classic translation factor GTPase family. PrfC subfamily.

The protein localises to the cytoplasm. Its function is as follows. Increases the formation of ribosomal termination complexes and stimulates activities of RF-1 and RF-2. It binds guanine nucleotides and has strong preference for UGA stop codons. It may interact directly with the ribosome. The stimulation of RF-1 and RF-2 is significantly reduced by GTP and GDP, but not by GMP. The protein is Peptide chain release factor 3 of Limosilactobacillus reuteri (strain DSM 20016) (Lactobacillus reuteri).